The sequence spans 224 residues: Metalloproteinase inhibitor 4 (224 aa).

An N-terminal signal peptide occupies residues 1-29 (MPGSPRPAPSWVLLLRLLALLRPPGLGEA). Residue Cys-30 coordinates Zn(2+). Involved in metalloproteinase-binding stretches follow at residues 30 to 33 (CSCA) and 99 to 100 (SS). 6 disulfide bridges follow: Cys-30–Cys-102, Cys-32–Cys-131, Cys-42–Cys-156, Cys-158–Cys-205, Cys-163–Cys-168, and Cys-176–Cys-197. The 127-residue stretch at 30-156 (CSCAPAHPQQ…SLNHHYHLNC (127 aa)) folds into the NTR domain.

It belongs to the protease inhibitor I35 (TIMP) family. In terms of tissue distribution, abundant in heart and present at low levels in many other tissues.

The protein resides in the secreted. In terms of biological role, complexes with metalloproteinases (such as collagenases) and irreversibly inactivates them by binding to their catalytic zinc cofactor. Known to act on MMP-1, MMP-2, MMP-3, MMP-7 and MMP-9. This is Metalloproteinase inhibitor 4 (TIMP4) from Homo sapiens (Human).